Consider the following 371-residue polypeptide: Dihydroorotate dehydrogenase (quinone) (371 aa).

FMN-binding positions include 79-83 (AGFDK) and T103. Substrate is bound at residue K83. Position 128-132 (128-132 (NRMGF)) interacts with substrate. Residues N156 and N189 each contribute to the FMN site. N189 is a binding site for substrate. S192 (nucleophile) is an active-site residue. Substrate is bound at residue N194. Residues K225 and T253 each contribute to the FMN site. 254–255 (NT) serves as a coordination point for substrate. FMN contacts are provided by residues G279, G308, and 329-330 (YT).

It belongs to the dihydroorotate dehydrogenase family. Type 2 subfamily. Monomer. FMN is required as a cofactor.

It localises to the cell membrane. It catalyses the reaction (S)-dihydroorotate + a quinone = orotate + a quinol. It participates in pyrimidine metabolism; UMP biosynthesis via de novo pathway; orotate from (S)-dihydroorotate (quinone route): step 1/1. Functionally, catalyzes the conversion of dihydroorotate to orotate with quinone as electron acceptor. This is Dihydroorotate dehydrogenase (quinone) from Corynebacterium glutamicum (strain ATCC 13032 / DSM 20300 / JCM 1318 / BCRC 11384 / CCUG 27702 / LMG 3730 / NBRC 12168 / NCIMB 10025 / NRRL B-2784 / 534).